We begin with the raw amino-acid sequence, 353 residues long: Photosystem II protein D1 (353 aa).

3 helical membrane-spanning segments follow: residues 29 to 46, 118 to 133, and 142 to 156; these read YVGW…TATI, HFLI…EWEL, and WICV…AATA. His118 is a binding site for chlorophyll a. Pheophytin a is bound at residue Tyr126. The [CaMn4O5] cluster site is built by Asp170 and Glu189. The chain crosses the membrane as a helical span at residues 197–218; it reads FHMLGVAGVFGGSLFSAMHGSL. His198 provides a ligand contact to chlorophyll a. Residues His215 and 264–265 contribute to the a quinone site; that span reads SF. Position 215 (His215) interacts with Fe cation. His272 contributes to the Fe cation binding site. A helical membrane pass occupies residues 274–288; it reads FLAAWPVVGIWFTSL. [CaMn4O5] cluster is bound by residues His332, Glu333, Asp342, and Ala344. Residues 345 to 353 constitute a propeptide that is removed on maturation; it reads AVKAPSIIG.

It belongs to the reaction center PufL/M/PsbA/D family. As to quaternary structure, PSII is composed of 1 copy each of membrane proteins PsbA, PsbB, PsbC, PsbD, PsbE, PsbF, PsbH, PsbI, PsbJ, PsbK, PsbL, PsbM, PsbT, PsbX, PsbY, PsbZ, Psb30/Ycf12, peripheral proteins PsbO, CyanoQ (PsbQ), PsbU, PsbV and a large number of cofactors. It forms dimeric complexes. The D1/D2 heterodimer binds P680, chlorophylls that are the primary electron donor of PSII, and subsequent electron acceptors. It shares a non-heme iron and each subunit binds pheophytin, quinone, additional chlorophylls, carotenoids and lipids. D1 provides most of the ligands for the Mn4-Ca-O5 cluster of the oxygen-evolving complex (OEC). There is also a Cl(-1) ion associated with D1 and D2, which is required for oxygen evolution. The PSII complex binds additional chlorophylls, carotenoids and specific lipids. is required as a cofactor. In terms of processing, tyr-161 forms a radical intermediate that is referred to as redox-active TyrZ, YZ or Y-Z. C-terminally processed by CtpA; processing is essential to allow assembly of the oxygen-evolving complex and thus photosynthetic growth.

It localises to the cellular thylakoid membrane. The enzyme catalyses 2 a plastoquinone + 4 hnu + 2 H2O = 2 a plastoquinol + O2. Photosystem II (PSII) is a light-driven water:plastoquinone oxidoreductase that uses light energy to abstract electrons from H(2)O, generating O(2) and a proton gradient subsequently used for ATP formation. It consists of a core antenna complex that captures photons, and an electron transfer chain that converts photonic excitation into a charge separation. The D1/D2 (PsbA/PsbD) reaction center heterodimer binds P680, the primary electron donor of PSII as well as several subsequent electron acceptors. The sequence is that of Photosystem II protein D1 from Prochlorothrix hollandica.